An 804-amino-acid polypeptide reads, in one-letter code: Phenylalanine--tRNA ligase beta subunit (804 aa).

A tRNA-binding domain is found at 39–155 (EEGLKKLVVG…ADVKPGQDVY (117 aa)). The 76-residue stretch at 408–483 (REPVVVKTTV…RIYGYDNLKS (76 aa)) folds into the B5 domain. Residues D461, D467, E470, and E471 each coordinate Mg(2+). Residues 711–804 (PKFPAIERDL…LENDLDIKVR (94 aa)) enclose the FDX-ACB domain.

This sequence belongs to the phenylalanyl-tRNA synthetase beta subunit family. Type 1 subfamily. As to quaternary structure, tetramer of two alpha and two beta subunits. Mg(2+) is required as a cofactor.

It is found in the cytoplasm. It carries out the reaction tRNA(Phe) + L-phenylalanine + ATP = L-phenylalanyl-tRNA(Phe) + AMP + diphosphate + H(+). The polypeptide is Phenylalanine--tRNA ligase beta subunit (Lactobacillus acidophilus (strain ATCC 700396 / NCK56 / N2 / NCFM)).